Reading from the N-terminus, the 387-residue chain is 17-beta-hydroxysteroid dehydrogenase type 2 (387 aa).

Residues F4–F24 traverse the membrane as a helical; Signal-anchor for type II membrane protein segment. Q82 to A111 is an NAD(+) binding site. Residue S219 participates in substrate binding. Y232 is a catalytic residue.

It belongs to the short-chain dehydrogenases/reductases (SDR) family. As to quaternary structure, homodimer. As to expression, expressed in placenta.

Its subcellular location is the endoplasmic reticulum membrane. It carries out the reaction 17beta-estradiol + NAD(+) = estrone + NADH + H(+). The catalysed reaction is testosterone + NAD(+) = androst-4-ene-3,17-dione + NADH + H(+). It catalyses the reaction 17beta-hydroxy-5alpha-androstan-3-one + NAD(+) = 5alpha-androstan-3,17-dione + NADH + H(+). The enzyme catalyses (20S)-hydroxypregn-4-en-3-one + NAD(+) = progesterone + NADH + H(+). Catalyzes the NAD-dependent oxidation of the highly active 17beta-hydroxysteroids, such as estradiol (E2), testosterone (T), and dihydrotestosterone (DHT), to their less active forms and thus regulates the biological potency of these steroids. Oxidizes estradiol to estrone, testosterone to androstenedione, and dihydrotestosterone to 5alpha-androstan-3,17-dione. Also has 20-alpha-HSD activity. This chain is 17-beta-hydroxysteroid dehydrogenase type 2, found in Homo sapiens (Human).